The chain runs to 296 residues: MNKKLLNPLEDPPTASSSEDVDEEISSGEDEKEHISNSSSSEEENELKDLSTQTLNSPSTEAPTLDSGSETNSDSDKPIVLTSQKKKEGTDSSGTKRASEGTSSKDIKRAKKVSGDDDNKKFQSLWTKEDEISLLQGMIDFKAETGTSAHDDMNGFFDIAKRYISFDVSKIQFGDKIRGLKKKYFGVRKKKGLDLDHDKKCLGLAKSIWGLDGKEVVVLGGDSETSNWFEKSFLVRVVARLGVDECIVKWKWSKVSKETKKRIEEKMKMVEAKELELLSQKIDVLKEVASVIAETI.

A disordered region spans residues 1–119 (MNKKLLNPLE…AKKVSGDDDN (119 aa)). A compositionally biased stretch (acidic residues) spans 19–28 (EDVDEEISSG). Residues 52 to 72 (TQTLNSPSTEAPTLDSGSETN) show a composition bias toward polar residues. A compositionally biased stretch (basic and acidic residues) spans 97–119 (RASEGTSSKDIKRAKKVSGDDDN).

The protein belongs to the GeBP family.

The protein is Probable transcription factor At1g44810 of Arabidopsis thaliana (Mouse-ear cress).